The primary structure comprises 262 residues: Homeobox protein vent1 (262 aa).

Basic and acidic residues-rich tracts occupy residues 16–26 (REEAPDGKDSV) and 44–55 (YAKEIPRRKDGQ). A disordered region spans residues 16-129 (REEAPDGKDS…KSPKSDLQRR (114 aa)). Residues 58-79 (GEITSFQCSSEEARNRQFSNPS) show a composition bias toward polar residues. The segment covering 114–128 (DTEHRSKSPKSDLQR) has biased composition (basic and acidic residues). Residues 127–186 (QRRLRTAFTPQQITRLEQAFNKQRYLGASERKKLATSLQLSEIQVKTWFQNRRMKLKRQI) constitute a DNA-binding region (homeobox).

The protein resides in the nucleus. Its function is as follows. Transcriptional repressor. Cooperates with vent2 in a ventral signaling pathway downstream of bmp4, which antagonizes the Spemann organizer and dorsal mesoderm formation, and leads to ventral mesoderm formation. Acts downstream of bmp4 to repress transcription of foxa4-B/XFD-1'. Binds to DNA with preference for the target sequence 5'-CTATT[T/C]G-3'. Also binds 5'-TGCATTTTG-3' at a lower frequency, and occasionally 5'-TTGATC-3'. Binds to the homeobox 2 (HBX2) repressor element in the promoter of the myf5 gene. Cooperates with vent2 to repress myf5 expression in the ventral domain. This Xenopus tropicalis (Western clawed frog) protein is Homeobox protein vent1.